We begin with the raw amino-acid sequence, 191 residues long: Pyridoxal 5'-phosphate synthase subunit PdxT (191 aa).

L-glutamine is bound at residue 46–48 (GES). The active-site Nucleophile is the Cys75. Residues Arg101 and 129–130 (IR) contribute to the L-glutamine site. Catalysis depends on charge relay system residues His165 and Glu167.

This sequence belongs to the glutaminase PdxT/SNO family. In the presence of PdxS, forms a dodecamer of heterodimers. Only shows activity in the heterodimer.

The catalysed reaction is aldehydo-D-ribose 5-phosphate + D-glyceraldehyde 3-phosphate + L-glutamine = pyridoxal 5'-phosphate + L-glutamate + phosphate + 3 H2O + H(+). It carries out the reaction L-glutamine + H2O = L-glutamate + NH4(+). It participates in cofactor biosynthesis; pyridoxal 5'-phosphate biosynthesis. Functionally, catalyzes the hydrolysis of glutamine to glutamate and ammonia as part of the biosynthesis of pyridoxal 5'-phosphate. The resulting ammonia molecule is channeled to the active site of PdxS. The sequence is that of Pyridoxal 5'-phosphate synthase subunit PdxT from Staphylococcus saprophyticus subsp. saprophyticus (strain ATCC 15305 / DSM 20229 / NCIMB 8711 / NCTC 7292 / S-41).